The sequence spans 963 residues: Protein translocase subunit SecA (963 aa).

ATP contacts are provided by residues Gln-87, Gly-105 to Thr-109, and Asp-512. Disordered regions lie at residues Gly-868–Thr-909 and Gln-924–Ser-963. Positions Pro-874 to Glu-886 are enriched in acidic residues. Residues Cys-949, Cys-951, Cys-960, and His-961 each coordinate Zn(2+).

The protein belongs to the SecA family. As to quaternary structure, monomer and homodimer. Part of the essential Sec protein translocation apparatus which comprises SecA, SecYEG and auxiliary proteins SecDF. Other proteins may also be involved. The cofactor is Zn(2+).

Its subcellular location is the cell inner membrane. It localises to the cytoplasm. The catalysed reaction is ATP + H2O + cellular proteinSide 1 = ADP + phosphate + cellular proteinSide 2.. Functionally, part of the Sec protein translocase complex. Interacts with the SecYEG preprotein conducting channel. Has a central role in coupling the hydrolysis of ATP to the transfer of proteins into and across the cell membrane, serving as an ATP-driven molecular motor driving the stepwise translocation of polypeptide chains across the membrane. This chain is Protein translocase subunit SecA, found in Solibacter usitatus (strain Ellin6076).